Reading from the N-terminus, the 298-residue chain is Glutamyl-Q tRNA(Asp) synthetase (298 aa).

L-glutamate is bound by residues arginine 8 to serine 12 and glutamate 44. The short motif at proline 11–serine 21 is the 'HIGH' region element. Residues cysteine 100, cysteine 102, tyrosine 123, and cysteine 127 each coordinate Zn(2+). L-glutamate is bound by residues tyrosine 183 and arginine 201. The short motif at lysine 239–glutamine 243 is the 'KMSKS' region element. An ATP-binding site is contributed by lysine 242.

It belongs to the class-I aminoacyl-tRNA synthetase family. GluQ subfamily. The cofactor is Zn(2+).

In terms of biological role, catalyzes the tRNA-independent activation of glutamate in presence of ATP and the subsequent transfer of glutamate onto a tRNA(Asp). Glutamate is transferred on the 2-amino-5-(4,5-dihydroxy-2-cyclopenten-1-yl) moiety of the queuosine in the wobble position of the QUC anticodon. The sequence is that of Glutamyl-Q tRNA(Asp) synthetase from Burkholderia orbicola (strain MC0-3).